The primary structure comprises 251 residues: FHA domain-containing protein FHA1 (251 aa).

The region spanning 32–89 is the FHA domain; sequence IILGRNSKKSTVDVDLSSLGGGMNISRNHARIFYDFTRRRFSLEVLGKNGCFVEGVLH. Residues 163 to 174 show a composition bias toward acidic residues; the sequence is EYDDEDDDEEED. The interval 163 to 209 is disordered; sequence EYDDEDDDEEEDIRGSGKKTWRDGHEGVYASGEKKREGRSKADREAD. The span at 182 to 206 shows a compositional bias: basic and acidic residues; that stretch reads TWRDGHEGVYASGEKKREGRSKADR.

In terms of tissue distribution, expressed in roots and vascular tissues near the shoot apex in young seedlings.

It localises to the nucleus. Functionally, may play a role in the control of plant organ development. Does not show transactivation activity in yeast. The protein is FHA domain-containing protein FHA1 of Arabidopsis thaliana (Mouse-ear cress).